Reading from the N-terminus, the 1023-residue chain is Phosphoenolpyruvate carboxylase (1023 aa).

Catalysis depends on residues His199 and Lys669.

The protein belongs to the PEPCase type 1 family. The cofactor is Mg(2+).

The enzyme catalyses oxaloacetate + phosphate = phosphoenolpyruvate + hydrogencarbonate. In terms of biological role, forms oxaloacetate, a four-carbon dicarboxylic acid source for the tricarboxylic acid cycle. The sequence is that of Phosphoenolpyruvate carboxylase from Trichormus variabilis (strain ATCC 29413 / PCC 7937) (Anabaena variabilis).